The following is a 1131-amino-acid chain: DNA polymerase II large subunit (1131 aa).

This sequence belongs to the archaeal DNA polymerase II family. In terms of assembly, heterodimer of a large subunit and a small subunit.

The catalysed reaction is DNA(n) + a 2'-deoxyribonucleoside 5'-triphosphate = DNA(n+1) + diphosphate. The enzyme catalyses Exonucleolytic cleavage in the 3'- to 5'-direction to yield nucleoside 5'-phosphates.. Functionally, possesses two activities: a DNA synthesis (polymerase) and an exonucleolytic activity that degrades single-stranded DNA in the 3'- to 5'-direction. Has a template-primer preference which is characteristic of a replicative DNA polymerase. In Methanococcus vannielii (strain ATCC 35089 / DSM 1224 / JCM 13029 / OCM 148 / SB), this protein is DNA polymerase II large subunit.